The following is a 245-amino-acid chain: NAD-dependent protein deacetylase (245 aa).

Residues 1–245 (MIFVQQFEEV…EFVEGLSSMK (245 aa)) form the Deacetylase sirtuin-type domain. Residues Ala26, Thr30, Phe37, Arg38, Gln105, Ile107, Asp108, and His123 each coordinate NAD(+). Phe37 serves as a coordination point for nicotinamide. Positions 107 and 108 each coordinate nicotinamide. His123 (proton acceptor) is an active-site residue. Residues Cys131, Cys134, Cys151, and Cys154 each coordinate Zn(2+). The NAD(+) site is built by Thr190, Ser191, Asn216, and Ile234.

It belongs to the sirtuin family. Class U subfamily. Requires Zn(2+) as cofactor.

Its subcellular location is the cytoplasm. It carries out the reaction N(6)-acetyl-L-lysyl-[protein] + NAD(+) + H2O = 2''-O-acetyl-ADP-D-ribose + nicotinamide + L-lysyl-[protein]. Functionally, NAD-dependent protein deacetylase which modulates the activities of several enzymes which are inactive in their acetylated form. The chain is NAD-dependent protein deacetylase from Bacillus cereus (strain ATCC 14579 / DSM 31 / CCUG 7414 / JCM 2152 / NBRC 15305 / NCIMB 9373 / NCTC 2599 / NRRL B-3711).